A 301-amino-acid polypeptide reads, in one-letter code: Probable alpha-L-glutamate ligase (301 aa).

An ATP-grasp domain is found at 104–287; the sequence is LQLLSRKGIG…VAGMIIQYLE (184 aa). ATP is bound by residues Lys-141, 178–179, Asp-187, and 211–213; these read EY and RSN. 3 residues coordinate Mg(2+): Asp-248, Glu-260, and Asn-262. Asp-248, Glu-260, and Asn-262 together coordinate Mn(2+).

Belongs to the RimK family. The cofactor is Mg(2+). Mn(2+) is required as a cofactor.

The chain is Probable alpha-L-glutamate ligase from Ectopseudomonas mendocina (strain ymp) (Pseudomonas mendocina).